The primary structure comprises 206 residues: Bacteriochlorophyll synthase 23 kDa chain (206 aa).

Its pathway is porphyrin-containing compound metabolism; bacteriochlorophyll biosynthesis (light-independent). The protein is Bacteriochlorophyll synthase 23 kDa chain (bchJ) of Cereibacter sphaeroides (strain ATCC 17023 / DSM 158 / JCM 6121 / CCUG 31486 / LMG 2827 / NBRC 12203 / NCIMB 8253 / ATH 2.4.1.) (Rhodobacter sphaeroides).